Reading from the N-terminus, the 171-residue chain is 3-hydroxydecanoyl-[acyl-carrier-protein] dehydratase (171 aa).

Residue H70 is part of the active site.

This sequence belongs to the thioester dehydratase family. FabA subfamily. As to quaternary structure, homodimer.

The protein localises to the cytoplasm. The enzyme catalyses a (3R)-hydroxyacyl-[ACP] = a (2E)-enoyl-[ACP] + H2O. The catalysed reaction is (3R)-hydroxydecanoyl-[ACP] = (2E)-decenoyl-[ACP] + H2O. It catalyses the reaction (2E)-decenoyl-[ACP] = (3Z)-decenoyl-[ACP]. It participates in lipid metabolism; fatty acid biosynthesis. Necessary for the introduction of cis unsaturation into fatty acids. Catalyzes the dehydration of (3R)-3-hydroxydecanoyl-ACP to E-(2)-decenoyl-ACP and then its isomerization to Z-(3)-decenoyl-ACP. Can catalyze the dehydratase reaction for beta-hydroxyacyl-ACPs with saturated chain lengths up to 16:0, being most active on intermediate chain length. The protein is 3-hydroxydecanoyl-[acyl-carrier-protein] dehydratase of Shewanella oneidensis (strain ATCC 700550 / JCM 31522 / CIP 106686 / LMG 19005 / NCIMB 14063 / MR-1).